Here is a 292-residue protein sequence, read N- to C-terminus: NADH-cytochrome b5 reductase 1 (292 aa).

Residues 12–32 (ALLVVGTAIFAVLVGAKFLGG) form a helical membrane-spanning segment. Residues 43–148 (TEFQNFVLKE…RGPKGAMVYT (106 aa)) enclose the FAD-binding FR-type domain. FAD contacts are provided by residues 128–143 (TTLK…GPKG) and 154–191 (HIGM…QVDL).

The protein belongs to the flavoprotein pyridine nucleotide cytochrome reductase family. In terms of assembly, monomer. Component of the 2-(3-amino-3-carboxypropyl)histidine synthase complex composed of dph1, dph2, dph3 and a NADH-dependent reductase, predominantly cbr1. It depends on FAD as a cofactor.

Its subcellular location is the mitochondrion outer membrane. It catalyses the reaction 2 Fe(III)-[cytochrome b5] + NADH = 2 Fe(II)-[cytochrome b5] + NAD(+) + H(+). The catalysed reaction is 2 Fe(3+)-[Dph3] + NADH = 2 Fe(2+)-[Dph3] + NAD(+) + H(+). Its pathway is protein modification; peptidyl-diphthamide biosynthesis. Its function is as follows. NADH-dependent reductase for dph3 and cytochrome b5. Required for the first step of diphthamide biosynthesis, a post-translational modification of histidine which occurs in elongation factor 2. Dph1 and dph2 transfer a 3-amino-3-carboxypropyl (ACP) group from S-adenosyl-L-methionine (SAM) to a histidine residue, the reaction is assisted by a reduction system comprising dph3 and a NADH-dependent reductase, predominantly cbr1. By reducing dph3, also involved in the formation of the tRNA wobble base modification mcm5s 2U (5-methoxycarbonylmethyl-2-thiouridine), mediated by the elongator complex. The cytochrome b5/NADH cytochrome b5 reductase electron transfer system supports the catalytic activity of several sterol biosynthetic enzymes. In Aspergillus oryzae (strain ATCC 42149 / RIB 40) (Yellow koji mold), this protein is NADH-cytochrome b5 reductase 1 (cbr1).